Reading from the N-terminus, the 338-residue chain is Stage V sporulation protein AD (338 aa).

The chain is Stage V sporulation protein AD (spoVAD) from Bacillus subtilis (strain 168).